We begin with the raw amino-acid sequence, 134 residues long: Lymphocyte antigen 6S (134 aa).

The N-terminal stretch at 1–26 is a signal peptide; sequence MSSLQAMKTLSLVLLVALLSMERAQG. Residues 28 to 76 enclose the UPAR/Ly6 domain; that stretch reads RCYRCLAVLEGASCSVVSCPFLDGVCVSQKVSVFGSKVRGENKLSLLSC. 4 disulfide bridges follow: Cys29–Cys53, Cys32–Cys41, Cys76–Cys98, and Cys99–Cys104. Asn105 is lipidated: GPI-anchor amidated asparagine. Residues 106–134 constitute a propeptide, removed in mature form; sequence AVVLAASSPWALCVQLLLSLGSVFLWALL.

The protein localises to the cell membrane. The polypeptide is Lymphocyte antigen 6S (Homo sapiens (Human)).